The sequence spans 380 residues: GPI-anchor transamidase (380 aa).

An N-terminal signal peptide occupies residues 1 to 19 (MIVQFVALLLLNLLQIIAA). Topologically, residues 20-354 (ESSHTNNWAV…TRELKYKKHP (335 aa)) are lumenal. Active-site residues include His145 and Cys187. A glycan (N-linked (GlcNAc...) asparagine) is linked at Asn307. A helical transmembrane segment spans residues 355 to 375 (ISRIISAVVCISFSIGFPYYA). At 376 to 380 (SKYLK) the chain is on the cytoplasmic side.

It belongs to the peptidase C13 family. As to quaternary structure, forms a complex with PIG-T homolog, PIG-U homolog and PIG-S homolog. In terms of processing, the disulfide bond between PIGK/GPI8 and PIGT is important for normal enzyme activity.

The protein resides in the endoplasmic reticulum membrane. The protein operates within glycolipid biosynthesis; glycosylphosphatidylinositol-anchor biosynthesis. Mediates GPI anchoring in the endoplasmic reticulum, by replacing a protein's C-terminal GPI attachment signal peptide with a pre-assembled GPI. During this transamidation reaction, the GPI transamidase forms a carbonyl intermediate with the substrate protein. The sequence is that of GPI-anchor transamidase (gpi8) from Schizosaccharomyces pombe (strain 972 / ATCC 24843) (Fission yeast).